A 147-amino-acid polypeptide reads, in one-letter code: Low molecular weight protein-tyrosine-phosphatase Wzb (147 aa).

The active-site Nucleophile is Cys-9. Residue Arg-15 is part of the active site. The Proton donor role is filled by Asp-115.

Belongs to the low molecular weight phosphotyrosine protein phosphatase family.

It carries out the reaction O-phospho-L-tyrosyl-[protein] + H2O = L-tyrosyl-[protein] + phosphate. It participates in glycan metabolism; exopolysaccharide biosynthesis. In terms of biological role, dephosphorylates Wzc. Required for the extracellular polysaccharide colanic acid synthesis. Probably involved in the export of colanic acid from the cell to medium. Involved in protection of cells against contact-dependent growth inhibition (CDI). This is Low molecular weight protein-tyrosine-phosphatase Wzb (wzb) from Escherichia coli O157:H7.